The chain runs to 324 residues: MSSTTVRPSVNALAAPLVEALVADAAKLRLTVTANSGEARLVNAGATVLGSIEAGRRIAEICLGGLGTVTIAPTGPVAAWPYTITVHSTDPVLACLGSQYAGWSLADEGGTSGFFALGSGPGRAAAAVEHLFEELHYKDNAVQIALVLESASAPPASVVAKVAEAAGVPLEAVTFIYAPTQSLAGSTQVVARVLEVALHKAHSVGFDLAKIVDGIGAAPLSPPHPDFIQAMGRTNDAIIYGGRVQLFVDAEDADAKGLAEALPSTTSRDHGAPFAEIFARFNGDFYAIDSHLFSPAEVVVTSVRTGHSHRSGRLVPDLVERSFA.

This sequence belongs to the MCH family.

The protein localises to the cytoplasm. The enzyme catalyses 5,10-methenyl-5,6,7,8-tetrahydromethanopterin + H2O = N(5)-formyl-5,6,7,8-tetrahydromethanopterin + H(+). Its pathway is one-carbon metabolism; formaldehyde degradation; formate from formaldehyde (H(4)MPT route): step 3/5. In terms of biological role, catalyzes the hydrolysis of methenyl-H(4)MPT(+) to 5-formyl-H(4)MPT. This Methylobacterium nodulans (strain LMG 21967 / CNCM I-2342 / ORS 2060) protein is Methenyltetrahydromethanopterin cyclohydrolase.